A 213-amino-acid chain; its full sequence is Probable septum site-determining protein MinC (213 aa).

The protein belongs to the MinC family. In terms of assembly, interacts with MinD and FtsZ.

In terms of biological role, cell division inhibitor that blocks the formation of polar Z ring septums. Rapidly oscillates between the poles of the cell to destabilize FtsZ filaments that have formed before they mature into polar Z rings. Prevents FtsZ polymerization. In Clostridium botulinum (strain Eklund 17B / Type B), this protein is Probable septum site-determining protein MinC.